Reading from the N-terminus, the 292-residue chain is MIRIILFLLTNLAVMLTFSLILAVTGIQSESIYGLLIMSSLFGFSGSILSLIMSKWIALRSVNGRIINHPSNETESWLIDTIRQQSIKKNIIMPQIAIYEAADINAFATGARRNAALIAISTGLLENMTRSEAEAVIAHEISHVSNGDMITMTLVQGVVNTFVIFISRIISQALSSLLSSNRNENSEDEKDSFLFFLISTFLEIIFGVLASIITMWFSRHREFYADASSAKLVGKEKMISALNRLKSSHEPQESDSIIAFCINGKSNSFIELFASHPSLEKRIQALKNKKYM.

The next 2 membrane-spanning stretches (helical) occupy residues 4 to 24 (IILF…ILAV) and 32 to 52 (IYGL…LSLI). Residue histidine 139 coordinates Zn(2+). Residue glutamate 140 is part of the active site. Histidine 143 provides a ligand contact to Zn(2+). A run of 2 helical transmembrane segments spans residues 150-170 (ITMT…SRII) and 193-213 (FLFF…ASII). Position 222 (glutamate 222) interacts with Zn(2+).

It belongs to the peptidase M48B family. Zn(2+) serves as cofactor.

It is found in the cell membrane. This is Protease HtpX from Buchnera aphidicola subsp. Schizaphis graminum (strain Sg).